Here is a 201-residue protein sequence, read N- to C-terminus: 3-isopropylmalate dehydratase small subunit (201 aa).

Belongs to the LeuD family. LeuD type 1 subfamily. Heterodimer of LeuC and LeuD.

The catalysed reaction is (2R,3S)-3-isopropylmalate = (2S)-2-isopropylmalate. Its pathway is amino-acid biosynthesis; L-leucine biosynthesis; L-leucine from 3-methyl-2-oxobutanoate: step 2/4. Its function is as follows. Catalyzes the isomerization between 2-isopropylmalate and 3-isopropylmalate, via the formation of 2-isopropylmaleate. The sequence is that of 3-isopropylmalate dehydratase small subunit from Ruegeria sp. (strain TM1040) (Silicibacter sp.).